The primary structure comprises 756 residues: Neutral ceramidase (756 aa).

The Cytoplasmic portion of the chain corresponds to 1–11 (MAKRTFSTLEA). Residues 12–32 (FLIFLLVIMTVITVALLTLLF) traverse the membrane as a helical; Signal-anchor for type II membrane protein segment. Residues 33–756 (VTSGTIENHK…ISSPFEVVTT (724 aa)) are Lumenal-facing. Residues Thr-56, Thr-57, Thr-58, and Thr-64 are each glycosylated (O-linked (GalNAc...) threonine). Leu-110 provides a ligand contact to Ca(2+). His-170 is a Zn(2+) binding site. N-linked (GlcNAc...) asparagine glycosylation is present at Asn-193. His-279 contributes to the Zn(2+) binding site. The Nucleophile role is filled by Ser-330. Cystine bridges form between Cys-338/Cys-352 and Cys-345/Cys-360. N-linked (GlcNAc...) asparagine glycosylation is found at Asn-407 and Asn-444. Residues Cys-424 and Cys-474 are joined by a disulfide bond. Positions 516 and 555 each coordinate Zn(2+). Ca(2+)-binding residues include Asp-688, Ser-690, and Thr-693. The required for correct folding and localization stretch occupies residues 746-756 (GISSPFEVVTT).

This sequence belongs to the neutral ceramidase family. In terms of assembly, may interact with CAV1. Requires Zn(2+) as cofactor. Post-translationally, proteolytic cleavage of the N-terminus removes the signal-anchor and produces a soluble form of the protein. In terms of processing, N-glycosylated. Required for enzyme activity. O-glycosylated. Required to retain it as a type II membrane protein at the cell surface. Post-translationally, phosphorylated. May prevent ubiquitination and subsequent degradation. In terms of processing, ubiquitinated, leading to its degradation by the proteasome. Ubiquitination is triggered by nitric oxide. Widely expressed. Strongly expressed in small intestine and to a lower extent in liver and kidney. Highly expressed in duodenum, jejunum and ileum along the brush border of the small intestine (at protein level).

Its subcellular location is the cell membrane. The protein resides in the membrane raft. The protein localises to the membrane. It is found in the caveola. It localises to the golgi apparatus membrane. Its subcellular location is the mitochondrion. The protein resides in the secreted. The protein localises to the extracellular exosome. The catalysed reaction is an N-acylsphing-4-enine + H2O = sphing-4-enine + a fatty acid. The enzyme catalyses N-hexadecanoylsphing-4-enine + H2O = sphing-4-enine + hexadecanoate. It catalyses the reaction N-dodecanoylsphing-4-enine + H2O = dodecanoate + sphing-4-enine. It carries out the reaction N-octadecanoylsphing-4-enine + H2O = sphing-4-enine + octadecanoate. The catalysed reaction is N-octanoylsphing-4-enine + H2O = octanoate + sphing-4-enine. The enzyme catalyses N-(hexanoyl)sphing-4-enine + H2O = hexanoate + sphing-4-enine. It catalyses the reaction N-tetradecanoylsphing-4-enine + H2O = tetradecanoate + sphing-4-enine. It carries out the reaction N-(9Z-octadecenoyl)-sphing-4-enine + H2O = sphing-4-enine + (9Z)-octadecenoate. The catalysed reaction is N-(15Z-tetracosenoyl)-sphing-4-enine + H2O = (15Z)-tetracosenoate + sphing-4-enine. The enzyme catalyses sphinganine + hexadecanoate = N-hexadecanoylsphinganine + H2O. It catalyses the reaction N-(octadecanoyl)-sphinganine + H2O = sphinganine + octadecanoate. Its pathway is lipid metabolism; sphingolipid metabolism. Its activity is regulated as follows. Inhibited by D-erythro-MAPP. Plasma membrane ceramidase that hydrolyzes sphingolipid ceramides into sphingosine and free fatty acids at neutral pH. Ceramides, sphingosine, and its phosphorylated form sphingosine-1-phosphate are bioactive lipids that mediate cellular signaling pathways regulating several biological processes including cell proliferation, apoptosis and differentiation. Also catalyzes the reverse reaction allowing the synthesis of ceramides from fatty acids and sphingosine. Together with sphingomyelinase, participates in the production of sphingosine and sphingosine-1-phosphate from the degradation of sphingomyelin, a sphingolipid enriched in the plasma membrane of cells. Also participates in the hydrolysis of ceramides from the extracellular milieu allowing the production of sphingosine-1-phosphate inside and outside cells. This is the case for instance with the digestion of dietary sphingolipids in the intestinal tract. The sequence is that of Neutral ceramidase (Asah2) from Mus musculus (Mouse).